The following is a 376-amino-acid chain: Probable ATP-dependent RNA helicase YfmL (376 aa).

Residues 35 to 205 (AQLIMDGKDV…RELAQEPEVL (171 aa)) enclose the Helicase ATP-binding domain. Residue 48 to 55 (SPTGTGKT) participates in ATP binding. A DEAD box motif is present at residues 153-156 (DETD). The region spanning 231–374 (KLLQKLSRLE…EAVYAGGKLK (144 aa)) is the Helicase C-terminal domain.

The protein belongs to the DEAD box helicase family.

The enzyme catalyses ATP + H2O = ADP + phosphate + H(+). A probable DEAD-box RNA helicase that plays a role in ribosomal 50S subunit assembly. May be a non-specific RNA helicase. The polypeptide is Probable ATP-dependent RNA helicase YfmL (yfmL) (Bacillus subtilis (strain 168)).